The following is a 381-amino-acid chain: MLKRSSLIYLSCVLIITIPILLHVYNGPGLSHEANEHRASHKQKRTLANPDKPKSENDEDLFCAVTNPVTGSYIDLSQLSSTPNKLREGQKQISGNNKHESSKTKWSVRGWGYDTNFTLGICSSPVGEAESQQLSNLTGAFYVDQLNENNLVSIGDFSTRPALVGGSTAKKLTLKYENGSMCPNGKDKKATLLNFVCDKEIQSKAQISYIGNLHNCSYFFEVRSIHACPTSNKKNEVNVLGIFIGIFAIFFLVEFAGRRWIYAKLNRHLKNDDELHDISPSLNEQPHWDLIEDGSRWSKFFNGIIKTTRRFTKSLMRSLVRGRNSRQGGIRLRSSPSASSSSLANREFFRDMEAQNEIIDSLDINSHTTESDHPTLADNSV.

The first 23 residues, 1–23 (MLKRSSLIYLSCVLIITIPILLH), serve as a signal peptide directing secretion. Residues 24-236 (VYNGPGLSHE…ACPTSNKKNE (213 aa)) are Lumenal-facing. Disordered regions lie at residues 33 to 57 (EANE…KSEN) and 81 to 104 (STPN…SSKT). Residues 61–230 (LFCAVTNPVT…EVRSIHACPT (170 aa)) form the MRH domain. Cys63 and Cys122 are oxidised to a cystine. 4 N-linked (GlcNAc...) asparagine glycosylation sites follow: Asn116, Asn136, Asn178, and Asn215. Disulfide bonds link Cys182/Cys216 and Cys197/Cys228. Residues 237–257 (VNVLGIFIGIFAIFFLVEFAG) traverse the membrane as a helical segment. Residues 258-381 (RRWIYAKLNR…DHPTLADNSV (124 aa)) lie on the Cytoplasmic side of the membrane. Residues Ser335, Ser339, Ser342, Ser371, and Ser380 each carry the phosphoserine modification. A disordered region spans residues 360-381 (DSLDINSHTTESDHPTLADNSV).

Belongs to the MRL1/IGF2R family.

Its subcellular location is the golgi apparatus. The protein resides in the trans-Golgi network membrane. It localises to the endosome membrane. Functionally, sorting receptor involved in the transport of vacuolar enzymes from the Golgi complex to the vacuole. Involved in the delivery and maturation of PEP4 (vacuolar proteinase A) and PRB1 (vacuolar proteinase B). The protein is Mannose 6-phosphate receptor-like protein 1 (MRL1) of Saccharomyces cerevisiae (strain ATCC 204508 / S288c) (Baker's yeast).